The primary structure comprises 376 residues: Neuropeptide receptor 3 (376 aa).

Topologically, residues 1 to 29 (MEGGRNCVMTVQQWQPEYNDMNQIRAIFS) are extracellular. Residues 30–50 (LLYLLVWVGAIVGNTLVLYVL) traverse the membrane as a helical segment. Residues 51–66 (TFNQVSLSVRTVFVGC) are Cytoplasmic-facing. The helical transmembrane segment at 67–87 (LAGSDLLMCLFSLPITAISIF) threads the bilayer. Over 88–89 (SR) the chain is Extracellular. Residues 90 to 110 (VWVFPAIFCKLIGVFQGGTIF) traverse the membrane as a helical segment. Cysteine 98 and cysteine 175 are joined by a disulfide. Over 111 to 139 (VSSFTLTVIALDRCVLILRPNQEIVNFPR) the chain is Cytoplasmic. Residues 140–160 (AVFIVFCIWLLGYSLALPVGI) form a helical membrane-spanning segment. Topologically, residues 161 to 197 (YSDIAVYDEICGTFCEENWPDFNPDTGRSGIRRAYGL) are extracellular. A helical transmembrane segment spans residues 198–218 (SVLVLQFGIPALISSICYWMI). The Cytoplasmic portion of the chain corresponds to 219-251 (SRVMSDQLARRRGHNIRPESETKLVNRKTRANR). The chain crosses the membrane as a helical span at residues 252 to 272 (MMIVMVVGFVLAWMPFNAVNL). Over 273 to 284 (YRDLFGISKWYS) the chain is Extracellular. Residues 285-305 (TVFALCHVCAMCSAVLNPIIY) form a helical membrane-spanning segment. At 306-376 (SWFNPQFRQS…NDYRAGDQLL (71 aa)) the chain is on the cytoplasmic side.

Belongs to the G-protein coupled receptor 1 family.

It is found in the cell membrane. Its function is as follows. G-protein coupled receptor for flp-15 neuropeptides. Receptor activation assays suggest binding to predicted flp-15 peptides, GGPQGPLRF-NH2 and RGPSGPLRF-NH2. Likely involved in Gi/Go-coupled signaling pathways. This Caenorhabditis elegans protein is Neuropeptide receptor 3.